A 514-amino-acid chain; its full sequence is Butyrophilin subfamily 2 member A2 (514 aa).

The N-terminal stretch at 1–29 is a signal peptide; the sequence is MEPTTSLRSCPIASLLFFLVLSLFVLVSA. An Ig-like V-type domain is found at 30 to 142; the sequence is QFTVIGPAEP…SYDQATMKLM (113 aa). Topologically, residues 30–244 are extracellular; sequence QFTVIGPAEP…ILIPESFVPS (215 aa). Residues Asn-47 and Asn-115 are each glycosylated (N-linked (GlcNAc...) asparagine). Intrachain disulfides connect Cys-52/Cys-126 and Cys-166/Cys-220. The Ig-like C2-type domain occupies 150–232; the sequence is PLIKMKTLED…NNTLLSQEVE (83 aa). The helical transmembrane segment at 245–265 threads the bilayer; the sequence is LPLWMVAVAVTLPVVMLILLT. Over 266–514 the chain is Cytoplasmic; that stretch reads SGSICLVKKH…PISQSLVRKP (249 aa). A coiled-coil region spans residues 281 to 304; that stretch reads ILSAEKEAEYEEKEAARQLQEELR. In terms of domain architecture, B30.2/SPRY spans 295–488; it reads AARQLQEELR…LFICPAFTGA (194 aa).

It belongs to the immunoglobulin superfamily. BTN/MOG family. Post-translationally, N-glycosylated. Widely expressed (at protein level). In the thymus, restricted to the corticomedullary junction, but not confined solely to epithelial cells (at protein level). Significant expression on naive B-cells, splenic natural killer cells, dendritic cells and peritoneal macrophages (at protein level). Negligible expression on naive T-cells up-regulated on activated T-cells (at protein level).

It is found in the membrane. Inhibits the proliferation of CD4 and CD8 T-cells activated by anti-CD3 antibodies, T-cell metabolism and IL2 and IFNG secretion. The protein is Butyrophilin subfamily 2 member A2 (Btn2a2) of Mus musculus (Mouse).